The sequence spans 288 residues: Structure-specific endonuclease subunit SLX1 (288 aa).

A GIY-YIG domain is found at 10–93 (DFYCSYLLRS…QHSYKTRFIE (84 aa)). An SLX1-type zinc finger spans residues 209–265 (CMICDKKIDYIHDEGTQMVGFCSDDECDFLSCLSCLYKEFTKNSKQIIPKSGHCPNC).

The protein belongs to the SLX1 family. In terms of assembly, forms a heterodimer with SLX4. Requires a divalent metal cation as cofactor.

It localises to the nucleus. Catalytic subunit of the SLX1-SLX4 structure-specific endonuclease that resolves DNA secondary structures generated during DNA repair and recombination. Has endonuclease activity towards branched DNA substrates, introducing single-strand cuts in duplex DNA close to junctions with ss-DNA. In Kluyveromyces lactis (strain ATCC 8585 / CBS 2359 / DSM 70799 / NBRC 1267 / NRRL Y-1140 / WM37) (Yeast), this protein is Structure-specific endonuclease subunit SLX1.